The chain runs to 455 residues: Probable glycine dehydrogenase (decarboxylating) subunit 1 (455 aa).

The protein belongs to the GcvP family. N-terminal subunit subfamily. In terms of assembly, the glycine cleavage system is composed of four proteins: P, T, L and H. In this organism, the P 'protein' is a heterodimer of two subunits.

The enzyme catalyses N(6)-[(R)-lipoyl]-L-lysyl-[glycine-cleavage complex H protein] + glycine + H(+) = N(6)-[(R)-S(8)-aminomethyldihydrolipoyl]-L-lysyl-[glycine-cleavage complex H protein] + CO2. In terms of biological role, the glycine cleavage system catalyzes the degradation of glycine. The P protein binds the alpha-amino group of glycine through its pyridoxal phosphate cofactor; CO(2) is released and the remaining methylamine moiety is then transferred to the lipoamide cofactor of the H protein. This is Probable glycine dehydrogenase (decarboxylating) subunit 1 from Saccharolobus islandicus (strain Y.N.15.51 / Yellowstone #2) (Sulfolobus islandicus).